Consider the following 261-residue polypeptide: Tryptophan synthase alpha chain (261 aa).

Active-site proton acceptor residues include E49 and D60.

It belongs to the TrpA family. Tetramer of two alpha and two beta chains.

It carries out the reaction (1S,2R)-1-C-(indol-3-yl)glycerol 3-phosphate + L-serine = D-glyceraldehyde 3-phosphate + L-tryptophan + H2O. It participates in amino-acid biosynthesis; L-tryptophan biosynthesis; L-tryptophan from chorismate: step 5/5. In terms of biological role, the alpha subunit is responsible for the aldol cleavage of indoleglycerol phosphate to indole and glyceraldehyde 3-phosphate. The chain is Tryptophan synthase alpha chain from Leifsonia xyli subsp. xyli (strain CTCB07).